Consider the following 210-residue polypeptide: Heart- and neural crest derivatives-expressed protein 2 (210 aa).

The interval 81–101 (SGAGGLMQRPVKRRGTANRKE) is disordered. Basic residues predominate over residues 90-101 (PVKRRGTANRKE). In terms of domain architecture, bHLH spans 92–144 (KRRGTANRKERRRTISINSAFAELRECIPNVPADTKLSKIKTLRLATSYIAYL).

Efficient DNA binding requires dimerization with another bHLH protein. As to expression, heart, liver and spleen.

It localises to the nucleus. Essential for cardiac morphogenesis and for the development of branchial arches. Binds DNA on E-box consensus sequence 5'-CANNTG-3'. This is Heart- and neural crest derivatives-expressed protein 2 (hand2) from Xenopus laevis (African clawed frog).